The sequence spans 427 residues: Serine hydroxymethyltransferase (427 aa).

(6S)-5,6,7,8-tetrahydrofolate-binding positions include Leu-118 and 122–124; that span reads GHL. Residue Lys-227 is modified to N6-(pyridoxal phosphate)lysine. A (6S)-5,6,7,8-tetrahydrofolate-binding site is contributed by 351–353; sequence SPF.

The protein belongs to the SHMT family. As to quaternary structure, homodimer. It depends on pyridoxal 5'-phosphate as a cofactor.

It localises to the cytoplasm. The enzyme catalyses (6R)-5,10-methylene-5,6,7,8-tetrahydrofolate + glycine + H2O = (6S)-5,6,7,8-tetrahydrofolate + L-serine. It participates in one-carbon metabolism; tetrahydrofolate interconversion. It functions in the pathway amino-acid biosynthesis; glycine biosynthesis; glycine from L-serine: step 1/1. Catalyzes the reversible interconversion of serine and glycine with tetrahydrofolate (THF) serving as the one-carbon carrier. This reaction serves as the major source of one-carbon groups required for the biosynthesis of purines, thymidylate, methionine, and other important biomolecules. Also exhibits THF-independent aldolase activity toward beta-hydroxyamino acids, producing glycine and aldehydes, via a retro-aldol mechanism. The chain is Serine hydroxymethyltransferase from Thermotoga petrophila (strain ATCC BAA-488 / DSM 13995 / JCM 10881 / RKU-1).